An 89-amino-acid chain; its full sequence is MALTQERKNEIIAEYRVHDTDTGSPEVQIAVLTAEINSLNEHVRVHKKDHHSYRGLMKMVGHRRNLLTYLRKKDVQRYRELIKRLGLRR.

The protein belongs to the universal ribosomal protein uS15 family. As to quaternary structure, part of the 30S ribosomal subunit. Forms a bridge to the 50S subunit in the 70S ribosome, contacting the 23S rRNA.

In terms of biological role, one of the primary rRNA binding proteins, it binds directly to 16S rRNA where it helps nucleate assembly of the platform of the 30S subunit by binding and bridging several RNA helices of the 16S rRNA. Functionally, forms an intersubunit bridge (bridge B4) with the 23S rRNA of the 50S subunit in the ribosome. The chain is Small ribosomal subunit protein uS15 from Listeria innocua serovar 6a (strain ATCC BAA-680 / CLIP 11262).